The following is a 956-amino-acid chain: Glutamyl aminopeptidase (956 aa).

The Cytoplasmic segment spans residues 1 to 21 (MILEERSSWEGSKRYCIKTKH). The chain crosses the membrane as a helical; Signal-anchor for type II membrane protein span at residues 22-42 (VAIICAVVVAVGLIVGLSVGL). Topologically, residues 43–956 (TRSCDSTEGM…IRNWFLDLNG (914 aa)) are extracellular. The interval 48 to 87 (STEGMTQGTTQGTTQAPSHLPPVTSPPEDQGVCPASEDES) is disordered. Residues 49–62 (TEGMTQGTTQGTTQ) are compositionally biased toward low complexity. 2 N-linked (GlcNAc...) asparagine glycosylation sites follow: asparagine 126 and asparagine 199. Residue glutamate 225 coordinates substrate. The N-linked (GlcNAc...) asparagine glycan is linked to asparagine 326. 359–363 (GAMEN) serves as a coordination point for substrate. Histidine 395 is a Zn(2+) binding site. Glutamate 396 functions as the Proton acceptor in the catalytic mechanism. Histidine 399 and glutamate 418 together coordinate Zn(2+). N-linked (GlcNAc...) asparagine glycans are attached at residues asparagine 556, asparagine 569, asparagine 599, asparagine 643, asparagine 647, asparagine 679, asparagine 764, asparagine 797, asparagine 802, and asparagine 829. Arginine 888 is a substrate binding site.

It belongs to the peptidase M1 family. Homodimer; disulfide-linked. Requires Zn(2+) as cofactor.

It is found in the cell membrane. It catalyses the reaction Release of N-terminal glutamate (and to a lesser extent aspartate) from a peptide.. Its activity is regulated as follows. Substrate specificity is modulated by calcium which enhances the enzymatic activity for cleavage of acidic residues while reducing its activity with basic residues. Inhibited by aminopeptidase inhibitors amastatin and bestatin. In terms of biological role, regulates central hypertension through its calcium-modulated preference to cleave N-terminal acidic residues from peptides such as angiotensin II. In Bos taurus (Bovine), this protein is Glutamyl aminopeptidase (ENPEP).